The following is a 343-amino-acid chain: Glycerol-3-phosphate dehydrogenase [NAD(P)+] (343 aa).

Positions 11, 12, 32, 33, and 106 each coordinate NADPH. 3 residues coordinate sn-glycerol 3-phosphate: Lys106, Gly136, and Ser138. Residue Ala140 coordinates NADPH. Residues Lys192, Asp245, Ser255, Arg256, and Asn257 each contribute to the sn-glycerol 3-phosphate site. The active-site Proton acceptor is the Lys192. Arg256 is an NADPH binding site. Positions 280 and 282 each coordinate NADPH.

It belongs to the NAD-dependent glycerol-3-phosphate dehydrogenase family.

It localises to the cytoplasm. The enzyme catalyses sn-glycerol 3-phosphate + NAD(+) = dihydroxyacetone phosphate + NADH + H(+). The catalysed reaction is sn-glycerol 3-phosphate + NADP(+) = dihydroxyacetone phosphate + NADPH + H(+). It functions in the pathway membrane lipid metabolism; glycerophospholipid metabolism. Catalyzes the reduction of the glycolytic intermediate dihydroxyacetone phosphate (DHAP) to sn-glycerol 3-phosphate (G3P), the key precursor for phospholipid synthesis. In Geobacillus thermodenitrificans (strain NG80-2), this protein is Glycerol-3-phosphate dehydrogenase [NAD(P)+].